We begin with the raw amino-acid sequence, 148 residues long: Trypsin inhibitor CMe (148 aa).

The first 24 residues, 1–24 (MAFKYQLLLSAAVMLAILVATATS), serve as a signal peptide directing secretion.

Belongs to the protease inhibitor I6 (cereal trypsin/alpha-amylase inhibitor) family. Five disulfide bonds, which are essential for the inhibitor activity, are probably present. Expressed in the developing endosperm. Not detected in embryo, aleurone, coleoptile, roots and leaves.

The protein resides in the secreted. Its function is as follows. Inhibits trypsin in vitro. Probably plays a protective role through inhibition of insect midgut proteases. The sequence is that of Trypsin inhibitor CMe (ITR1) from Hordeum vulgare (Barley).